Consider the following 227-residue polypeptide: Cytochrome c oxidase subunit 2 (227 aa).

Over 1 to 14 the chain is Mitochondrial intermembrane; that stretch reads MAYPMQLGFQDATS. Residues 15 to 45 traverse the membrane as a helical segment; sequence PIMEELLHFHDHTLMIVFLISSLVLYIISLM. Residues 46–59 lie on the Mitochondrial matrix side of the membrane; it reads LTTKLTHTSTMDAQ. The helical transmembrane segment at 60–87 threads the bilayer; it reads EVETVWTILPAIILIMIALPSLRILYMM. Over 88–227 the chain is Mitochondrial intermembrane; it reads DEINNPSLTV…YFEKWSASML (140 aa). Cu cation is bound by residues histidine 161, cysteine 196, glutamate 198, cysteine 200, histidine 204, and methionine 207. Mg(2+) is bound at residue glutamate 198. Residue tyrosine 218 is modified to Phosphotyrosine.

The protein belongs to the cytochrome c oxidase subunit 2 family. As to quaternary structure, component of the cytochrome c oxidase (complex IV, CIV), a multisubunit enzyme composed of 14 subunits. The complex is composed of a catalytic core of 3 subunits MT-CO1, MT-CO2 and MT-CO3, encoded in the mitochondrial DNA, and 11 supernumerary subunits COX4I, COX5A, COX5B, COX6A, COX6B, COX6C, COX7A, COX7B, COX7C, COX8 and NDUFA4, which are encoded in the nuclear genome. The complex exists as a monomer or a dimer and forms supercomplexes (SCs) in the inner mitochondrial membrane with NADH-ubiquinone oxidoreductase (complex I, CI) and ubiquinol-cytochrome c oxidoreductase (cytochrome b-c1 complex, complex III, CIII), resulting in different assemblies (supercomplex SCI(1)III(2)IV(1) and megacomplex MCI(2)III(2)IV(2)). Found in a complex with TMEM177, COA6, COX18, COX20, SCO1 and SCO2. Interacts with TMEM177 in a COX20-dependent manner. Interacts with COX20. Interacts with COX16. Cu cation serves as cofactor.

It localises to the mitochondrion inner membrane. The catalysed reaction is 4 Fe(II)-[cytochrome c] + O2 + 8 H(+)(in) = 4 Fe(III)-[cytochrome c] + 2 H2O + 4 H(+)(out). Component of the cytochrome c oxidase, the last enzyme in the mitochondrial electron transport chain which drives oxidative phosphorylation. The respiratory chain contains 3 multisubunit complexes succinate dehydrogenase (complex II, CII), ubiquinol-cytochrome c oxidoreductase (cytochrome b-c1 complex, complex III, CIII) and cytochrome c oxidase (complex IV, CIV), that cooperate to transfer electrons derived from NADH and succinate to molecular oxygen, creating an electrochemical gradient over the inner membrane that drives transmembrane transport and the ATP synthase. Cytochrome c oxidase is the component of the respiratory chain that catalyzes the reduction of oxygen to water. Electrons originating from reduced cytochrome c in the intermembrane space (IMS) are transferred via the dinuclear copper A center (CU(A)) of subunit 2 and heme A of subunit 1 to the active site in subunit 1, a binuclear center (BNC) formed by heme A3 and copper B (CU(B)). The BNC reduces molecular oxygen to 2 water molecules using 4 electrons from cytochrome c in the IMS and 4 protons from the mitochondrial matrix. In Capra hircus (Goat), this protein is Cytochrome c oxidase subunit 2 (MT-CO2).